A 159-amino-acid polypeptide reads, in one-letter code: Transmembrane protein 92 (159 aa).

A signal peptide spans 1–26 (MSQAWVPGLAPTLLFSLLAGPQKIAA). Residues 27-57 (KCGLILACPKGFKCCGDSCCQENELFPGPVR) are Extracellular-facing. Residues 58–78 (IFVIIFLVILSVFCICGLAKC) traverse the membrane as a helical segment. The Cytoplasmic segment spans residues 79–159 (FCRNCREPEP…DQRGIDNPAF (81 aa)). The segment at 122 to 159 (EVILKPSLGPTPTEPPPPYSFRPEEYTGDQRGIDNPAF) is disordered.

It is found in the membrane. The sequence is that of Transmembrane protein 92 (TMEM92) from Homo sapiens (Human).